A 102-amino-acid polypeptide reads, in one-letter code: Small ribosomal subunit protein bS6 (102 aa).

It belongs to the bacterial ribosomal protein bS6 family.

Functionally, binds together with bS18 to 16S ribosomal RNA. The sequence is that of Small ribosomal subunit protein bS6 (rpsF) from Deinococcus radiodurans (strain ATCC 13939 / DSM 20539 / JCM 16871 / CCUG 27074 / LMG 4051 / NBRC 15346 / NCIMB 9279 / VKM B-1422 / R1).